The primary structure comprises 135 residues: 2-iminobutanoate/2-iminopropanoate deaminase (135 aa).

N-acetylserine is present on serine 2. 4 positions are modified to N6-succinyllysine: lysine 13, lysine 60, lysine 67, and lysine 134.

The protein belongs to the RutC family. In terms of assembly, homotrimer. Interacts with YTHDF2. As to expression, expressed predominantly in liver and kidney. Lower levels in lung and brain.

The protein localises to the cytoplasm. It is found in the nucleus. The protein resides in the peroxisome. Its subcellular location is the mitochondrion. It catalyses the reaction 2-iminobutanoate + H2O = 2-oxobutanoate + NH4(+). The catalysed reaction is 2-iminopropanoate + H2O = pyruvate + NH4(+). Its function is as follows. Catalyzes the hydrolytic deamination of enamine/imine intermediates that form during the course of normal metabolism. May facilitate the release of ammonia from these potentially toxic reactive metabolites, reducing their impact on cellular components. It may act on enamine/imine intermediates formed by several types of pyridoxal-5'-phosphate-dependent dehydratases including L-threonine dehydratase. In terms of biological role, also promotes endoribonucleolytic cleavage of some transcripts by promoting recruitment of the ribonuclease P/MRP complex. Acts by bridging YTHDF2 and the ribonuclease P/MRP complex. RIDA/HRSP12 binds to N6-methyladenosine (m6A)-containing mRNAs containing a 5'-GGUUC-3' motif: cooperative binding of RIDA/HRSP12 and YTHDF2 to such transcripts lead to recruitment of the ribonuclease P/MRP complex and subsequent endoribonucleolytic cleavage. The chain is 2-iminobutanoate/2-iminopropanoate deaminase from Mus musculus (Mouse).